A 553-amino-acid chain; its full sequence is Arginine--tRNA ligase (553 aa).

The short motif at proline 132–histidine 140 is the 'HIGH' region element.

The protein belongs to the class-I aminoacyl-tRNA synthetase family. In terms of assembly, monomer.

The protein localises to the cytoplasm. It catalyses the reaction tRNA(Arg) + L-arginine + ATP = L-arginyl-tRNA(Arg) + AMP + diphosphate. The protein is Arginine--tRNA ligase of Staphylococcus aureus (strain N315).